A 348-amino-acid chain; its full sequence is MAEMSFLSSEVLGGDFVSPFDQLGLGAEESLGLLDDNLEVAKHFKHHGFSCDKAKAGSSEWLAVDWLVSDNSKEDAFSGTDWMVEKMDLKEFDFDILFSKDDLETMPDELLATLDDTCDLFQPLVQETNKEPPQIVNPIGHLPEGLPTIDQGAPFTFFQPLPPSPGTLSSTPDHSFSLELCSEVVIPEGDSKPDSTTTGFPQCIKEEDAPSDNDSGICMSPDSSLGSPQDSPSTSRGSPNKSLLSPGALSGSSRPKPYDPPGEKMVAAKVKGEKLDKKLKKMEQNKTAATRYRQKKRAEQEALTGECKELEKKNEALKEKADSLAKEIQYLKDQIEEVRKAREKKRVL.

Lys53 participates in a covalent cross-link: Glycyl lysine isopeptide (Lys-Gly) (interchain with G-Cter in SUMO2). Disordered stretches follow at residues 151–174 and 187–265; these read QGAP…TPDH and PEGD…GEKM. Residues Ser211, Ser215, Ser220, Ser227, and Ser231 each carry the phosphoserine modification. The BetaTrCP degron motif signature appears at 211-220; sequence SDNDSGICMS. The segment covering 221–241 has biased composition (polar residues); that stretch reads PDSSLGSPQDSPSTSRGSPNK. At Pro232 the chain carries 4-hydroxyproline. Phosphoserine is present on residues Ser242 and Ser245. Residues 242–253 are compositionally biased toward low complexity; it reads SLLSPGALSGSS. Glycyl lysine isopeptide (Lys-Gly) (interchain with G-Cter in SUMO2) cross-links involve residues Lys256, Lys264, and Lys269. The 64-residue stretch at 275–338 folds into the bZIP domain; it reads LDKKLKKMEQ…QYLKDQIEEV (64 aa). The tract at residues 277-297 is basic motif; the sequence is KKLKKMEQNKTAATRYRQKKR. Residues 302 to 338 form an interaction with GABBR1 region; the sequence is ALTGECKELEKKNEALKEKADSLAKEIQYLKDQIEEV. The tract at residues 303-331 is leucine-zipper; that stretch reads LTGECKELEKKNEALKEKADSLAKEIQYL. N6-acetyllysine is present on Lys308.

The protein belongs to the bZIP family. As to quaternary structure, binds DNA as a homodimer and as a heterodimer. Heterodimer; heterodimerizes with CEBPB. Heterodimer; heterodimerizes with DDIT3/CHOP. Interacts with CEP290 (via an N-terminal region). Interacts with NEK6, DAPK2 (isoform 2) and ZIPK/DAPK3. Interacts (via its leucine zipper domain) with GABBR1 and GABBR2 (via their C-termini). Forms a heterodimer with TXLNG in osteoblasts. Interacts (via its DNA binding domain) with FOXO1 (C-terminal half); the interaction occurs in osteoblasts and regulates glucose homeostasis through suppression of beta-cell proliferation and a decrease in insulin production. Interacts with SATB2; the interaction results in enhanced DNA binding and transactivation by these transcription factors. Interacts with ABRAXAS2. Interacts with TRIB3, inhibiting the transactivation activity of ATF4. Interacts with DISC1; which inhibits ATF4 transcription factor activity by disrupting ATF4 dimerization and DNA-binding. Interacts with EP300/p300; EP300/p300 stabilizes ATF4 and increases its transcriptional activity independently of its catalytic activity by preventing its ubiquitination. Post-translationally, ubiquitinated by SCF(BTRC) in response to mTORC1 signal, followed by proteasomal degradation and leading to down-regulate expression of SIRT4. Interaction with EP300/p300 inhibits ubiquitination by SCF(BTRC). Phosphorylation at Ser-242 by RPS6KA3/RSK2 in osteoblasts enhances transactivation activity and promotes osteoblast differentiation. Phosphorylated on the betaTrCP degron motif at Ser-215, followed by phosphorylation at Ser-220, Ser-227, Ser-231 and Ser-245, promoting interaction with BTRC and ubiquitination. Phosphorylation is promoted by mTORC1. Phosphorylation at Ser-211 by CK2 decreases its stability. Phosphorylated by NEK6. In terms of processing, hydroxylated by PHD3, leading to decreased protein stability.

It is found in the nucleus. The protein resides in the nucleus speckle. The protein localises to the cytoplasm. It localises to the cell membrane. Its subcellular location is the cytoskeleton. It is found in the microtubule organizing center. The protein resides in the centrosome. In terms of biological role, transcription factor that binds the cAMP response element (CRE) (consensus: 5'-GTGACGT[AC][AG]-3') and displays two biological functions, as regulator of metabolic and redox processes under normal cellular conditions, and as master transcription factor during integrated stress response (ISR). Binds to asymmetric CRE's as a heterodimer and to palindromic CRE's as a homodimer. Core effector of the ISR, which is required for adaptation to various stress such as endoplasmic reticulum (ER) stress, amino acid starvation, mitochondrial stress or oxidative stress. During ISR, ATF4 translation is induced via an alternative ribosome translation re-initiation mechanism in response to EIF2S1/eIF-2-alpha phosphorylation, and stress-induced ATF4 acts as a master transcription factor of stress-responsive genes in order to promote cell recovery. Promotes the transcription of genes linked to amino acid sufficiency and resistance to oxidative stress to protect cells against metabolic consequences of ER oxidation. Activates the transcription of NLRP1, possibly in concert with other factors in response to ER stress. Activates the transcription of asparagine synthetase (ASNS) in response to amino acid deprivation or ER stress. However, when associated with DDIT3/CHOP, the transcriptional activation of the ASNS gene is inhibited in response to amino acid deprivation. Together with DDIT3/CHOP, mediates programmed cell death by promoting the expression of genes involved in cellular amino acid metabolic processes, mRNA translation and the terminal unfolded protein response (terminal UPR), a cellular response that elicits programmed cell death when ER stress is prolonged and unresolved. Activates the expression of COX7A2L/SCAF1 downstream of the EIF2AK3/PERK-mediated unfolded protein response, thereby promoting formation of respiratory chain supercomplexes and increasing mitochondrial oxidative phosphorylation. Together with DDIT3/CHOP, activates the transcription of the IRS-regulator TRIB3 and promotes ER stress-induced neuronal cell death by regulating the expression of BBC3/PUMA in response to ER stress. May cooperate with the UPR transcriptional regulator QRICH1 to regulate ER protein homeostasis which is critical for cell viability in response to ER stress. In the absence of stress, ATF4 translation is at low levels and it is required for normal metabolic processes such as embryonic lens formation, fetal liver hematopoiesis, bone development and synaptic plasticity. Acts as a regulator of osteoblast differentiation in response to phosphorylation by RPS6KA3/RSK2: phosphorylation in osteoblasts enhances transactivation activity and promotes expression of osteoblast-specific genes and post-transcriptionally regulates the synthesis of Type I collagen, the main constituent of the bone matrix. Cooperates with FOXO1 in osteoblasts to regulate glucose homeostasis through suppression of beta-cell production and decrease in insulin production. Activates transcription of SIRT4. Regulates the circadian expression of the core clock component PER2 and the serotonin transporter SLC6A4. Binds in a circadian time-dependent manner to the cAMP response elements (CRE) in the SLC6A4 and PER2 promoters and periodically activates the transcription of these genes. Mainly acts as a transcriptional activator in cellular stress adaptation, but it can also act as a transcriptional repressor: acts as a regulator of synaptic plasticity by repressing transcription, thereby inhibiting induction and maintenance of long-term memory. Regulates synaptic functions via interaction with DISC1 in neurons, which inhibits ATF4 transcription factor activity by disrupting ATF4 dimerization and DNA-binding. In Bos taurus (Bovine), this protein is Cyclic AMP-dependent transcription factor ATF-4.